The primary structure comprises 434 residues: Phosphomethylpyrimidine synthase 2 (434 aa).

Residues Met94, Tyr123, His162, 184 to 186 (SRG), 225 to 228 (NAMR), and Glu264 contribute to the substrate site. His268 lines the Zn(2+) pocket. Tyr291 contributes to the substrate binding site. His332 is a Zn(2+) binding site. Residues Cys408, Cys411, and Cys415 each contribute to the [4Fe-4S] cluster site.

It belongs to the ThiC family. [4Fe-4S] cluster serves as cofactor.

It catalyses the reaction 5-amino-1-(5-phospho-beta-D-ribosyl)imidazole + S-adenosyl-L-methionine = 4-amino-2-methyl-5-(phosphooxymethyl)pyrimidine + CO + 5'-deoxyadenosine + formate + L-methionine + 3 H(+). The protein operates within cofactor biosynthesis; thiamine diphosphate biosynthesis. Its function is as follows. Catalyzes the synthesis of the hydroxymethylpyrimidine phosphate (HMP-P) moiety of thiamine from aminoimidazole ribotide (AIR) in a radical S-adenosyl-L-methionine (SAM)-dependent reaction. The polypeptide is Phosphomethylpyrimidine synthase 2 (Methanosphaera stadtmanae (strain ATCC 43021 / DSM 3091 / JCM 11832 / MCB-3)).